Here is a 265-residue protein sequence, read N- to C-terminus: Tryptophan synthase alpha chain (265 aa).

Active-site proton acceptor residues include E41 and D52.

This sequence belongs to the TrpA family. As to quaternary structure, tetramer of two alpha and two beta chains.

It catalyses the reaction (1S,2R)-1-C-(indol-3-yl)glycerol 3-phosphate + L-serine = D-glyceraldehyde 3-phosphate + L-tryptophan + H2O. Its pathway is amino-acid biosynthesis; L-tryptophan biosynthesis; L-tryptophan from chorismate: step 5/5. Functionally, the alpha subunit is responsible for the aldol cleavage of indoleglycerol phosphate to indole and glyceraldehyde 3-phosphate. The polypeptide is Tryptophan synthase alpha chain (Bacillus velezensis (strain DSM 23117 / BGSC 10A6 / LMG 26770 / FZB42) (Bacillus amyloliquefaciens subsp. plantarum)).